Reading from the N-terminus, the 84-residue chain is Large ribosomal subunit protein bL31B (84 aa).

The protein belongs to the bacterial ribosomal protein bL31 family. Type B subfamily. Part of the 50S ribosomal subunit.

This chain is Large ribosomal subunit protein bL31B, found in Acinetobacter baumannii (strain AB307-0294).